Reading from the N-terminus, the 198-residue chain is MYNIKFLDLLNSNLKPNPQWIFKDPHPILREVTQDIEGNELSKDDIYYLKKMVRYIDVCYHNQAKKYKIRSGIAIAANQVGWNKRATYIHFNDEAKEHHYLLINPHIIKRSSEIAYLNPGEGCLSVDDDRSGYVIRNKKVHVKAYDLISEQFIDQEFSGIIAICIQHEIGHLDAGLYYDNINQQQPFYADPSWTKIGR.

Fe cation is bound by residues Cys-123 and His-167. The active site involves Glu-168. A Fe cation-binding site is contributed by His-171.

It belongs to the polypeptide deformylase family. It depends on Fe(2+) as a cofactor.

The catalysed reaction is N-terminal N-formyl-L-methionyl-[peptide] + H2O = N-terminal L-methionyl-[peptide] + formate. In terms of biological role, removes the formyl group from the N-terminal Met of newly synthesized proteins. Requires at least a dipeptide for an efficient rate of reaction. N-terminal L-methionine is a prerequisite for activity but the enzyme has broad specificity at other positions. This is Peptide deformylase from Ureaplasma parvum serovar 3 (strain ATCC 27815 / 27 / NCTC 11736).